A 142-amino-acid polypeptide reads, in one-letter code: Transcriptional regulator MraZ (142 aa).

SpoVT-AbrB domains lie at 5–51 (ASAL…PRPE) and 77–120 (AMDV…DSQT).

The protein belongs to the MraZ family. In terms of assembly, forms oligomers.

It localises to the cytoplasm. The protein localises to the nucleoid. This chain is Transcriptional regulator MraZ, found in Burkholderia cenocepacia (strain HI2424).